A 429-amino-acid polypeptide reads, in one-letter code: Adenylosuccinate synthetase (429 aa).

Residues 12-18 (GDEGKGK) and 40-42 (GHT) each bind GTP. Residue D13 is the Proton acceptor of the active site. Positions 13 and 40 each coordinate Mg(2+). Residues 13-16 (DEGK), 38-41 (NAGH), T128, R142, Q223, T238, and R302 each bind IMP. H41 serves as the catalytic Proton donor. 298–304 (VNTGRPR) is a substrate binding site. GTP-binding positions include R304, 330–332 (KLD), and 412–414 (GVG).

Belongs to the adenylosuccinate synthetase family. As to quaternary structure, homodimer. Mg(2+) serves as cofactor.

The protein resides in the cytoplasm. The catalysed reaction is IMP + L-aspartate + GTP = N(6)-(1,2-dicarboxyethyl)-AMP + GDP + phosphate + 2 H(+). It participates in purine metabolism; AMP biosynthesis via de novo pathway; AMP from IMP: step 1/2. Plays an important role in the de novo pathway of purine nucleotide biosynthesis. Catalyzes the first committed step in the biosynthesis of AMP from IMP. The protein is Adenylosuccinate synthetase of Micrococcus luteus (strain ATCC 4698 / DSM 20030 / JCM 1464 / CCM 169 / CCUG 5858 / IAM 1056 / NBRC 3333 / NCIMB 9278 / NCTC 2665 / VKM Ac-2230) (Micrococcus lysodeikticus).